The following is a 581-amino-acid chain: Activating signal cointegrator 1 (581 aa).

Ala-2 carries the post-translational modification N-acetylalanine. Residues 100–121 are disordered; it reads DQLKRSRRKGRNKQEVPAFPEP. A C4-type zinc finger spans residues 167-219; sequence GRHPCDCLGQKHKLINNCLVCGRIVCEQEGSGPCLFCGSLVCTNEEQDILQRD. The mediates interaction with DDRGK1 stretch occupies residues 200–300; it reads CLFCGSLVCT…ASDSNQWLSK (101 aa). Ser-276 carries the post-translational modification Phosphoserine. At Tyr-289 the chain carries Phosphotyrosine. The mediates interaction with UFL1 stretch occupies residues 300-400; it reads KVEREMLQKR…WVDNTGSTPQ (101 aa). Residues Lys-324 and Lys-334 each participate in a glycyl lysine isopeptide (Lys-Gly) (interchain with G-Cter in UFM1) cross-link. A compositionally biased stretch (polar residues) spans 390–406; that stretch reads QWVDNTGSTPQKKTSLS. The segment at 390–410 is disordered; sequence QWVDNTGSTPQKKTSLSAGPR. Residues 437-531 enclose the ASCH domain; sequence LSMHQPWASL…FQEQFPDISQ (95 aa).

In terms of assembly, interacts with the thyroid hormone receptor/TR (via the ligand-binding domain); this interaction requires the presence of thyroid hormone. Interacts with the androgen receptor/AR; in an androgen, testosterone and dihydrotestosterone-dependent manner. Interacts with ESR1 (estrogen ligand-bound); competes with UFSP2. Interacts with UFSP2; competes with ligand-bound ESR1. Interacts with DDRGK1 and UFL1; the interaction with DDRGK1 is direct. Interacts with NCOA1. Interacts with EP300. Part of the ASC-1 complex, that contains TRIP4, ASCC1, ASCC2 and ASCC3. Identified in the RQT (ribosome quality control trigger) complex, that contains ASCC2, ASCC3 and TRIP4. Interacts with NEK6. Interacts with CSRP1. Interacts with ZCCHC4. Phosphorylated by NEK6. Post-translationally, polyufmylated by the UFM1-conjugating system composed of the enzymes UBA5, UFC1 and UFL1. Deufmylated by the protease UFSP2. Ufmylation of TRIP4 is promoted by ligand-bound nuclear receptors that compete with UFSP2 for interaction with TRIP4. Nuclear receptors-induced ufmylation promotes the recruitment of additional transcriptional coactivators like EP300 and NCOA1 and therefore the assembly of a coactivator complex facilitating nuclear receptor-mediated transcription. As to expression, ubiquitously expressed. Expressed in the spinal cord, brain, paraspinal ganglia, thyroid, and submandibular glands. Expressed at low level in all the muscles (at protein level) but with higher expression in axial than in limb muscles.

It is found in the nucleus. The protein localises to the cytoplasm. Its subcellular location is the cytosol. The protein resides in the cytoskeleton. It localises to the microtubule organizing center. It is found in the centrosome. Functionally, transcription coactivator which associates with nuclear receptors, transcriptional coactivators including EP300, CREBBP and NCOA1, and basal transcription factors like TBP and TFIIA to facilitate nuclear receptors-mediated transcription. May thereby play an important role in establishing distinct coactivator complexes under different cellular conditions. Plays a role in thyroid hormone receptor and estrogen receptor transactivation. Also involved in androgen receptor transactivation. Plays a pivotal role in the transactivation of NF-kappa-B, SRF and AP1. Acts as a mediator of transrepression between nuclear receptor and either AP1 or NF-kappa-B. May play a role in the development of neuromuscular junction. May play a role in late myogenic differentiation. Also functions as part of the RQC trigger (RQT) complex that activates the ribosome quality control (RQC) pathway, a pathway that degrades nascent peptide chains during problematic translation. This Mus musculus (Mouse) protein is Activating signal cointegrator 1.